The sequence spans 165 residues: NADPH-dependent 7-cyano-7-deazaguanine reductase (165 aa).

Residues 1-24 are disordered; sequence MTTRSTDQTEHLRALGQKTPYPAA. Cys56 serves as the catalytic Thioimide intermediate. The active-site Proton donor is Asp63. Residues 78 to 80 and 97 to 98 contribute to the substrate site; these read VES and ME.

Belongs to the GTP cyclohydrolase I family. QueF type 1 subfamily.

It is found in the cytoplasm. It catalyses the reaction 7-aminomethyl-7-carbaguanine + 2 NADP(+) = 7-cyano-7-deazaguanine + 2 NADPH + 3 H(+). The protein operates within tRNA modification; tRNA-queuosine biosynthesis. Functionally, catalyzes the NADPH-dependent reduction of 7-cyano-7-deazaguanine (preQ0) to 7-aminomethyl-7-deazaguanine (preQ1). This is NADPH-dependent 7-cyano-7-deazaguanine reductase from Nitratidesulfovibrio vulgaris (strain ATCC 29579 / DSM 644 / CCUG 34227 / NCIMB 8303 / VKM B-1760 / Hildenborough) (Desulfovibrio vulgaris).